Here is a 228-residue protein sequence, read N- to C-terminus: U1 small nuclear ribonucleoprotein C (228 aa).

Residues 11–43 (ATVDYCDIFLTHDSASVRKAHNTGWKHKMQVEH) form a Matrin-type; degenerate zinc finger. The segment at 83 to 127 (GQRGQPVGGPPRPPQPFHNGGRPGPPGRPPMGMFPPQRPMMPPPH) is disordered. Residues 105-127 (PGPPGRPPMGMFPPQRPMMPPPH) are compositionally biased toward pro residues.

It belongs to the U1 small nuclear ribonucleoprotein C family. U1 snRNP is composed of the 7 core Sm proteins B/B', D1, D2, D3, E, F and G that assemble in a heptameric protein ring on the Sm site of the small nuclear RNA to form the core snRNP, and at least 3 U1 snRNP-specific proteins U1-70K, U1-A and U1-C. U1-C interacts with U1 snRNA and the 5' splice-site region of the pre-mRNA.

It is found in the nucleus. Component of the spliceosomal U1 snRNP, which is essential for recognition of the pre-mRNA 5' splice-site and the subsequent assembly of the spliceosome. U1-C is directly involved in initial 5' splice-site recognition for both constitutive and regulated alternative splicing. The interaction with the 5' splice-site seems to precede base-pairing between the pre-mRNA and the U1 snRNA. Stimulates commitment or early (E) complex formation by stabilizing the base pairing of the 5' end of the U1 snRNA and the 5' splice-site region. This is U1 small nuclear ribonucleoprotein C from Batrachochytrium dendrobatidis (strain JAM81 / FGSC 10211) (Frog chytrid fungus).